The sequence spans 344 residues: S-methyl-5'-thioadenosine phosphorylase (344 aa).

Residues Thr-45, 88–89, and 121–122 each bind phosphate; these read RH and SA. Substrate is bound at residue Met-238. Ser-239 contributes to the phosphate binding site. 262 to 264 serves as a coordination point for substrate; the sequence is DYD.

This sequence belongs to the PNP/MTAP phosphorylase family. MTAP subfamily. Homotrimer.

The protein resides in the cytoplasm. Its subcellular location is the nucleus. It catalyses the reaction S-methyl-5'-thioadenosine + phosphate = 5-(methylsulfanyl)-alpha-D-ribose 1-phosphate + adenine. It participates in amino-acid biosynthesis; L-methionine biosynthesis via salvage pathway; S-methyl-5-thio-alpha-D-ribose 1-phosphate from S-methyl-5'-thioadenosine (phosphorylase route): step 1/1. Its function is as follows. Catalyzes the reversible phosphorylation of S-methyl-5'-thioadenosine (MTA) to adenine and 5-methylthioribose-1-phosphate. Involved in the breakdown of MTA, a major by-product of polyamine biosynthesis. Responsible for the first step in the methionine salvage pathway after MTA has been generated from S-adenosylmethionine. Has broad substrate specificity with 6-aminopurine nucleosides as preferred substrates. The protein is S-methyl-5'-thioadenosine phosphorylase of Candida albicans (strain SC5314 / ATCC MYA-2876) (Yeast).